The following is a 76-amino-acid chain: uncharacterized protein (76 aa).

Residues 1–22 form the signal peptide; that stretch reads MFTKALSVVLLTCALFSGQLMA.

This is an uncharacterized protein from Escherichia coli O157:H7.